The chain runs to 302 residues: Sulfotransferase 1C4 (302 aa).

Lys-55–Trp-60 contributes to the 3'-phosphoadenylyl sulfate binding site. Lys-113–His-115 lines the substrate pocket. The active-site Proton acceptor is His-115. Residues Arg-137, Ser-145, Tyr-200, Thr-234–Met-239, and Phe-262–Gly-266 each bind 3'-phosphoadenylyl sulfate.

It belongs to the sulfotransferase 1 family. Expressed in liver, kidney and jejunum.

The protein localises to the cytoplasm. It is found in the cytosol. The catalysed reaction is a phenol + 3'-phosphoadenylyl sulfate = an aryl sulfate + adenosine 3',5'-bisphosphate + H(+). The enzyme catalyses 17beta-estradiol + 3'-phosphoadenylyl sulfate = 17beta-estradiol 3-sulfate + adenosine 3',5'-bisphosphate + H(+). It carries out the reaction bisphenol A + 3'-phosphoadenylyl sulfate = bisphenyl A sulfate + adenosine 3',5'-bisphosphate + H(+). In terms of biological role, sulfotransferase that utilizes 3'-phospho-5'-adenylyl sulfate (PAPS) as sulfonate donor to catalyze the sulfate conjugation of phenolic compounds and estrogen (E2). Can also sulfonate estrogenic compounds, however, the dietary flavonoids (phytoestrogen) and environmental estrogens, like bisphenol A are better substrates than 17beta-estradiol (E2). In Macaca fascicularis (Crab-eating macaque), this protein is Sulfotransferase 1C4 (SULT1C4).